The following is a 98-amino-acid chain: Putative defensin-like protein 233 (98 aa).

Positions 1–28 (MGMWCTTLFMVSCVSICLILSHVQEVEA) are cleaved as a signal peptide. 4 cysteine pairs are disulfide-bonded: C35/C96, C45/C70, C53/C86, and C68/C88.

The protein belongs to the DEFL family. As to expression, expressed at least in stem, root, rosette leaves and flower buds.

The protein localises to the secreted. This is Putative defensin-like protein 233 (SCRL22) from Arabidopsis thaliana (Mouse-ear cress).